The sequence spans 134 residues: Small ribosomal subunit protein uS8c (134 aa).

This sequence belongs to the universal ribosomal protein uS8 family. In terms of assembly, part of the 30S ribosomal subunit.

Its subcellular location is the plastid. It is found in the chloroplast. One of the primary rRNA binding proteins, it binds directly to 16S rRNA central domain where it helps coordinate assembly of the platform of the 30S subunit. In Coffea arabica (Arabian coffee), this protein is Small ribosomal subunit protein uS8c (rps8).